A 293-amino-acid polypeptide reads, in one-letter code: Pyridoxal 5'-phosphate synthase subunit PdxS (293 aa).

Position 23 (Asp-23) interacts with D-ribose 5-phosphate. Catalysis depends on Lys-80, which acts as the Schiff-base intermediate with D-ribose 5-phosphate. Gly-152 contacts D-ribose 5-phosphate. Arg-164 is a D-glyceraldehyde 3-phosphate binding site. D-ribose 5-phosphate contacts are provided by residues Gly-213 and 234–235 (GS).

Belongs to the PdxS/SNZ family. As to quaternary structure, in the presence of PdxT, forms a dodecamer of heterodimers.

The catalysed reaction is aldehydo-D-ribose 5-phosphate + D-glyceraldehyde 3-phosphate + L-glutamine = pyridoxal 5'-phosphate + L-glutamate + phosphate + 3 H2O + H(+). It participates in cofactor biosynthesis; pyridoxal 5'-phosphate biosynthesis. Catalyzes the formation of pyridoxal 5'-phosphate from ribose 5-phosphate (RBP), glyceraldehyde 3-phosphate (G3P) and ammonia. The ammonia is provided by the PdxT subunit. Can also use ribulose 5-phosphate and dihydroxyacetone phosphate as substrates, resulting from enzyme-catalyzed isomerization of RBP and G3P, respectively. This Thermus thermophilus (strain ATCC BAA-163 / DSM 7039 / HB27) protein is Pyridoxal 5'-phosphate synthase subunit PdxS.